The chain runs to 500 residues: Protein nucleotidyltransferase YdiU (500 aa).

Residues Gly-96, Gly-98, Arg-99, Lys-119, Asp-131, Gly-132, Arg-182, and Arg-189 each coordinate ATP. Catalysis depends on Asp-258, which acts as the Proton acceptor. The Mg(2+) site is built by Asn-259 and Asp-268. Position 268 (Asp-268) interacts with ATP.

It belongs to the SELO family. It depends on Mg(2+) as a cofactor. The cofactor is Mn(2+).

The enzyme catalyses L-seryl-[protein] + ATP = 3-O-(5'-adenylyl)-L-seryl-[protein] + diphosphate. It catalyses the reaction L-threonyl-[protein] + ATP = 3-O-(5'-adenylyl)-L-threonyl-[protein] + diphosphate. It carries out the reaction L-tyrosyl-[protein] + ATP = O-(5'-adenylyl)-L-tyrosyl-[protein] + diphosphate. The catalysed reaction is L-histidyl-[protein] + UTP = N(tele)-(5'-uridylyl)-L-histidyl-[protein] + diphosphate. The enzyme catalyses L-seryl-[protein] + UTP = O-(5'-uridylyl)-L-seryl-[protein] + diphosphate. It catalyses the reaction L-tyrosyl-[protein] + UTP = O-(5'-uridylyl)-L-tyrosyl-[protein] + diphosphate. Its function is as follows. Nucleotidyltransferase involved in the post-translational modification of proteins. It can catalyze the addition of adenosine monophosphate (AMP) or uridine monophosphate (UMP) to a protein, resulting in modifications known as AMPylation and UMPylation. In Rhizobium etli (strain ATCC 51251 / DSM 11541 / JCM 21823 / NBRC 15573 / CFN 42), this protein is Protein nucleotidyltransferase YdiU.